Here is a 304-residue protein sequence, read N- to C-terminus: E3 ubiquitin-protein ligase CCNB1IP1 homolog (304 aa).

The RING-type; degenerate zinc-finger motif lies at 3-42; the sequence is CNACWRDLEGRAISTTCGHLLCTEDASKILSNDGACPICD. A coiled-coil region spans residues 124-184; sequence TAYQKMGKRC…YESVKRTAIQ (61 aa). The interval 218-279 is disordered; it reads SFFSPATPGP…GGGGTANPQS (62 aa). Positions 235–250 are enriched in polar residues; it reads RQNSSNSGPFDISTDS.

In terms of tissue distribution, expressed mostly in flower buds and roots.

The protein resides in the nucleus. It is found in the chromosome. It carries out the reaction S-ubiquitinyl-[E2 ubiquitin-conjugating enzyme]-L-cysteine + [acceptor protein]-L-lysine = [E2 ubiquitin-conjugating enzyme]-L-cysteine + N(6)-ubiquitinyl-[acceptor protein]-L-lysine.. The protein operates within protein modification; protein ubiquitination. Its function is as follows. Ubiquitin E3 ligase required for class I crossover (CO) formation during meiosis. This is E3 ubiquitin-protein ligase CCNB1IP1 homolog (HEI10) from Arabidopsis thaliana (Mouse-ear cress).